The sequence spans 361 residues: Queuine tRNA-ribosyltransferase (361 aa).

D92 serves as the catalytic Proton acceptor. Substrate is bound by residues D92–F96, D146, Q189, and G216. An RNA binding region spans residues G247–D253. D266 functions as the Nucleophile in the catalytic mechanism. An RNA binding; important for wobble base 34 recognition region spans residues T271–R275. 4 residues coordinate Zn(2+): C304, C306, C309, and H335.

This sequence belongs to the queuine tRNA-ribosyltransferase family. As to quaternary structure, homodimer. Within each dimer, one monomer is responsible for RNA recognition and catalysis, while the other monomer binds to the replacement base PreQ1. The cofactor is Zn(2+).

It carries out the reaction 7-aminomethyl-7-carbaguanine + guanosine(34) in tRNA = 7-aminomethyl-7-carbaguanosine(34) in tRNA + guanine. It participates in tRNA modification; tRNA-queuosine biosynthesis. In terms of biological role, catalyzes the base-exchange of a guanine (G) residue with the queuine precursor 7-aminomethyl-7-deazaguanine (PreQ1) at position 34 (anticodon wobble position) in tRNAs with GU(N) anticodons (tRNA-Asp, -Asn, -His and -Tyr). Catalysis occurs through a double-displacement mechanism. The nucleophile active site attacks the C1' of nucleotide 34 to detach the guanine base from the RNA, forming a covalent enzyme-RNA intermediate. The proton acceptor active site deprotonates the incoming PreQ1, allowing a nucleophilic attack on the C1' of the ribose to form the product. After dissociation, two additional enzymatic reactions on the tRNA convert PreQ1 to queuine (Q), resulting in the hypermodified nucleoside queuosine (7-(((4,5-cis-dihydroxy-2-cyclopenten-1-yl)amino)methyl)-7-deazaguanosine). The sequence is that of Queuine tRNA-ribosyltransferase from Rickettsia rickettsii (strain Iowa).